A 435-amino-acid chain; its full sequence is NADH-quinone oxidoreductase subunit D 2 (435 aa).

The protein belongs to the complex I 49 kDa subunit family. NDH-1 is composed of 14 different subunits. Subunits NuoB, C, D, E, F, and G constitute the peripheral sector of the complex.

Its subcellular location is the cell inner membrane. It carries out the reaction a quinone + NADH + 5 H(+)(in) = a quinol + NAD(+) + 4 H(+)(out). Its function is as follows. NDH-1 shuttles electrons from NADH, via FMN and iron-sulfur (Fe-S) centers, to quinones in the respiratory chain. The immediate electron acceptor for the enzyme in this species is believed to be ubiquinone. Couples the redox reaction to proton translocation (for every two electrons transferred, four hydrogen ions are translocated across the cytoplasmic membrane), and thus conserves the redox energy in a proton gradient. This is NADH-quinone oxidoreductase subunit D 2 from Stenotrophomonas maltophilia (strain R551-3).